The sequence spans 160 residues: Archaemetzincin (160 aa).

His117 serves as a coordination point for Zn(2+). Catalysis depends on Glu118, which acts as the Proton acceptor. Positions 121, 127, 128, 132, 151, and 154 each coordinate Zn(2+).

This sequence belongs to the peptidase M54 family. In terms of assembly, monomer. Zn(2+) serves as cofactor.

Its function is as follows. Probable zinc metalloprotease whose natural substrate is unknown. The sequence is that of Archaemetzincin from Archaeoglobus fulgidus (strain ATCC 49558 / DSM 4304 / JCM 9628 / NBRC 100126 / VC-16).